We begin with the raw amino-acid sequence, 147 residues long: Microtubule-associated protein 1 light chain 3 gamma (147 aa).

Phosphoserine; by TBK1 occurs at positions 93 and 96. The Phosphatidylethanolamine amidated glycine; alternate moiety is linked to residue Gly-126. The Phosphatidylserine amidated glycine; alternate moiety is linked to residue Gly-126. A propeptide spans Cys-127–Leu-147 (removed in mature form).

It belongs to the ATG8 family. As to quaternary structure, 3 different light chains, LC1 (a cleavage product of MAP1B), LC2 (a cleavage product of MAP1A) and LC3 (produced by one of the MAP1LC3 genes), can associate with the MAP1A or MAP1B heavy chains. Interacts with TP53INP1 and TP53INP2. Interacts with CALCOCO2. Interacts with TECPR2. Interacts with TBC1D5. Found in a complex with UBQLN1 and UBQLN2. Interacts with UBQLN4 (via STI1 1 and 2 domains). Interacts with UBQLN1 in the presence of UBQLN4. Interacts with TRIM5. Interacts with ATG13. Interacts with MEFV and TRIM21. Interacts with WDR81; recruits MAP1LC3C to ubiquitinated protein aggregates in the aggrephagy process. Interacts with MOAP1 (via LIR motif). Interacts with reticulophagy regulators RETREG1, RETREG2 and RETREG3. Interacts with TAX1BP1. Interacts with IRGM. Interacts with SPART. The precursor molecule is cleaved by ATG4 (ATG4A, ATG4B, ATG4C or ATG4D) to expose the glycine at the C-terminus and form the cytosolic form, LC3-I. The processed form is then activated by APG7L/ATG7, transferred to ATG3 and conjugated to phosphatidylethanolamine (PE) phospholipid to form the membrane-bound form, LC3-II. During non-canonical autophagy, the processed form is conjugated to phosphatidylserine (PS) phospholipid. ATG4 proteins also mediate the delipidation of PE-conjugated forms. In addition, ATG4B and ATG4D mediate delipidation of ATG8 proteins conjugated to PS during non-canonical autophagy. In terms of processing, (Microbial infection) The Legionella effector RavZ is a deconjugating enzyme that hydrolyzes the amide bond between the C-terminal glycine residue and an adjacent aromatic residue in ATG8 proteins conjugated to phosphatidylethanolamine (PE), producing an ATG8 protein that is resistant to reconjugation by the host machinery due to the cleavage of the reactive C-terminal glycine. RavZ is also able to mediate delipidation of ATG8 proteins conjugated to phosphatidylserine (PS). Post-translationally, phosphorylation at Ser-96 and Ser-98 by TBK1 prevents interaction with ATG4 (ATG4A, ATG4B, ATG4C or ATG4D). Phosphorylation by TBK1 on autophagosomes prevents their delipidation by ATG4 and premature removal from nascent autophagosomes. Most abundant in placenta, lung and ovary.

The protein resides in the cytoplasmic vesicle. The protein localises to the autophagosome membrane. Its subcellular location is the endomembrane system. It localises to the cytoplasm. It is found in the cytoskeleton. In terms of biological role, ubiquitin-like modifier that plays a crucial role in antibacterial autophagy (xenophagy) through the selective binding of CALCOCO2. Recruits all ATG8 family members to infecting bacteria such as S.typhimurium. May also play a role in aggrephagy, the macroautophagic degradation of ubiquitinated and aggregated proteins. This is Microtubule-associated protein 1 light chain 3 gamma (MAP1LC3C) from Homo sapiens (Human).